Reading from the N-terminus, the 227-residue chain is ATP synthase F(0) complex subunit a (227 aa).

The next 6 helical transmembrane spans lie at 13–33 (YLLGIPLILVAMLLPWLLFPA), 69–89 (WALLFASLMVFLITINLLGLL), 98–118 (QLSLNMGFAVPLWLATVIIGM), 132–152 (EGTPIPLIPALIIIETISLFI), 179–199 (VFVLLPMMPAVAILTASVLFL), and 202–222 (LLEVAVAMIQAYVFILLLSLY).

This sequence belongs to the ATPase A chain family. In terms of assembly, component of the ATP synthase complex composed at least of ATP5F1A/subunit alpha, ATP5F1B/subunit beta, ATP5MC1/subunit c (homooctomer), MT-ATP6/subunit a, MT-ATP8/subunit 8, ATP5ME/subunit e, ATP5MF/subunit f, ATP5MG/subunit g, ATP5MK/subunit k, ATP5MJ/subunit j, ATP5F1C/subunit gamma, ATP5F1D/subunit delta, ATP5F1E/subunit epsilon, ATP5PF/subunit F6, ATP5PB/subunit b, ATP5PD/subunit d, ATP5PO/subunit OSCP. ATP synthase complex consists of a soluble F(1) head domain (subunits alpha(3) and beta(3)) - the catalytic core - and a membrane F(0) domain - the membrane proton channel (subunits c, a, 8, e, f, g, k and j). These two domains are linked by a central stalk (subunits gamma, delta, and epsilon) rotating inside the F1 region and a stationary peripheral stalk (subunits F6, b, d, and OSCP). Interacts with DNAJC30; interaction is direct.

Its subcellular location is the mitochondrion inner membrane. It carries out the reaction H(+)(in) = H(+)(out). Subunit a, of the mitochondrial membrane ATP synthase complex (F(1)F(0) ATP synthase or Complex V) that produces ATP from ADP in the presence of a proton gradient across the membrane which is generated by electron transport complexes of the respiratory chain. ATP synthase complex consist of a soluble F(1) head domain - the catalytic core - and a membrane F(1) domain - the membrane proton channel. These two domains are linked by a central stalk rotating inside the F(1) region and a stationary peripheral stalk. During catalysis, ATP synthesis in the catalytic domain of F(1) is coupled via a rotary mechanism of the central stalk subunits to proton translocation. With the subunit c (ATP5MC1), forms the proton-conducting channel in the F(0) domain, that contains two crucial half-channels (inlet and outlet) that facilitate proton movement from the mitochondrial intermembrane space (IMS) into the matrix. Protons are taken up via the inlet half-channel and released through the outlet half-channel, following a Grotthuss mechanism. The polypeptide is ATP synthase F(0) complex subunit a (Danio rerio (Zebrafish)).